We begin with the raw amino-acid sequence, 242 residues long: DNA repair protein RecO (242 aa).

The protein belongs to the RecO family. In terms of assembly, monomer.

Functionally, involved in DNA repair and RecF pathway recombination. The protein is DNA repair protein RecO of Shigella flexneri.